A 397-amino-acid polypeptide reads, in one-letter code: Argininosuccinate synthase (397 aa).

Residue 9–17 (AYSGGLDTT) participates in ATP binding. L-citrulline is bound at residue Tyr87. Position 117 (Gly117) interacts with ATP. The L-aspartate site is built by Thr119, Asn123, and Asp124. Asn123 is an L-citrulline binding site. Residues Arg127, Ser174, Ser183, Glu259, and Tyr271 each coordinate L-citrulline.

It belongs to the argininosuccinate synthase family. Type 1 subfamily. As to quaternary structure, homotetramer.

It localises to the cytoplasm. It carries out the reaction L-citrulline + L-aspartate + ATP = 2-(N(omega)-L-arginino)succinate + AMP + diphosphate + H(+). It functions in the pathway amino-acid biosynthesis; L-arginine biosynthesis; L-arginine from L-ornithine and carbamoyl phosphate: step 2/3. This chain is Argininosuccinate synthase, found in Pyrobaculum aerophilum (strain ATCC 51768 / DSM 7523 / JCM 9630 / CIP 104966 / NBRC 100827 / IM2).